Here is a 103-residue protein sequence, read N- to C-terminus: Integration host factor subunit alpha (103 aa).

This sequence belongs to the bacterial histone-like protein family. Heterodimer of an alpha and a beta chain.

Its function is as follows. This protein is one of the two subunits of integration host factor, a specific DNA-binding protein that functions in genetic recombination as well as in transcriptional and translational control. This is Integration host factor subunit alpha from Bartonella bacilliformis (strain ATCC 35685 / KC583 / Herrer 020/F12,63).